Consider the following 316-residue polypeptide: Probable 5-dehydro-4-deoxyglucarate dehydratase 1 (316 aa).

The protein belongs to the DapA family.

The catalysed reaction is 5-dehydro-4-deoxy-D-glucarate + H(+) = 2,5-dioxopentanoate + CO2 + H2O. It functions in the pathway carbohydrate acid metabolism; D-glucarate degradation; 2,5-dioxopentanoate from D-glucarate: step 2/2. The sequence is that of Probable 5-dehydro-4-deoxyglucarate dehydratase 1 from Streptomyces coelicolor (strain ATCC BAA-471 / A3(2) / M145).